The following is a 261-amino-acid chain: Eukaryotic translation initiation factor 3 subunit G (261 aa).

Residues Gln-156–Glu-180 form a disordered region. Residues Gly-168–Glu-180 show a composition bias toward basic and acidic residues. The region spanning Asn-181–Pro-259 is the RRM domain.

It belongs to the eIF-3 subunit G family. Component of the eukaryotic translation initiation factor 3 (eIF-3) complex.

The protein resides in the cytoplasm. Its function is as follows. RNA-binding component of the eukaryotic translation initiation factor 3 (eIF-3) complex, which is involved in protein synthesis of a specialized repertoire of mRNAs and, together with other initiation factors, stimulates binding of mRNA and methionyl-tRNAi to the 40S ribosome. The eIF-3 complex specifically targets and initiates translation of a subset of mRNAs involved in cell proliferation. This subunit can bind 18S rRNA. The chain is Eukaryotic translation initiation factor 3 subunit G from Caenorhabditis briggsae.